We begin with the raw amino-acid sequence, 367 residues long: Phosphoribosylaminoimidazole-succinocarboxamide synthase (367 aa).

Belongs to the SAICAR synthetase family.

It carries out the reaction 5-amino-1-(5-phospho-D-ribosyl)imidazole-4-carboxylate + L-aspartate + ATP = (2S)-2-[5-amino-1-(5-phospho-beta-D-ribosyl)imidazole-4-carboxamido]succinate + ADP + phosphate + 2 H(+). Its pathway is purine metabolism; IMP biosynthesis via de novo pathway; 5-amino-1-(5-phospho-D-ribosyl)imidazole-4-carboxamide from 5-amino-1-(5-phospho-D-ribosyl)imidazole-4-carboxylate: step 1/2. The protein is Phosphoribosylaminoimidazole-succinocarboxamide synthase of Aeromonas salmonicida (strain A449).